A 132-amino-acid chain; its full sequence is Large ribosomal subunit protein bL21 (132 aa).

The interval 112–132 (AEKPARKPRAKKTNEVTTDGA) is disordered.

The protein belongs to the bacterial ribosomal protein bL21 family. As to quaternary structure, part of the 50S ribosomal subunit. Contacts protein L20.

In terms of biological role, this protein binds to 23S rRNA in the presence of protein L20. The polypeptide is Large ribosomal subunit protein bL21 (Dehalococcoides mccartyi (strain ATCC BAA-2266 / KCTC 15142 / 195) (Dehalococcoides ethenogenes (strain 195))).